A 187-amino-acid polypeptide reads, in one-letter code: UPF0301 protein ECA3925 (187 aa).

This sequence belongs to the UPF0301 (AlgH) family.

This Pectobacterium atrosepticum (strain SCRI 1043 / ATCC BAA-672) (Erwinia carotovora subsp. atroseptica) protein is UPF0301 protein ECA3925.